The sequence spans 234 residues: LexA repressor (234 aa).

The H-T-H motif DNA-binding region spans 41 to 61; sequence RAEIANELGFKSANAAEEHLQ. Active-site for autocatalytic cleavage activity residues include S152 and K189.

The protein belongs to the peptidase S24 family. As to quaternary structure, homodimer.

It carries out the reaction Hydrolysis of Ala-|-Gly bond in repressor LexA.. Represses a number of genes involved in the response to DNA damage (SOS response), including recA and lexA. In the presence of single-stranded DNA, RecA interacts with LexA causing an autocatalytic cleavage which disrupts the DNA-binding part of LexA, leading to derepression of the SOS regulon and eventually DNA repair. The protein is LexA repressor of Polaromonas sp. (strain JS666 / ATCC BAA-500).